The following is a 312-amino-acid chain: Taste receptor type 2 member 9 (312 aa).

The Extracellular segment spans residues 1–9 (MPSAIEAIY). A helical transmembrane segment spans residues 10 to 32 (IILIAGELTIGIWGNGFIVLVNC). At 33–52 (IDWLKRRDISLIDIILISLA) the chain is on the cytoplasmic side. A helical transmembrane segment spans residues 53–72 (ISRICLLCVISLDGFFMLLF). The Extracellular segment spans residues 73 to 86 (PGTYGNSVLVSIVN). A helical membrane pass occupies residues 87-109 (VVWTFANNSSLWFTSCLSIFYLL). At 110–128 (KIANISHPFFFWLKLKINK) the chain is on the cytoplasmic side. A helical transmembrane segment spans residues 129-146 (VMLAILLGSFLISLIISV). The Extracellular segment spans residues 147 to 180 (PKNDDMWYHLFKVSHEENITWKFKVSKIPGTFKQ). The N-linked (GlcNAc...) asparagine glycan is linked to N164. Residues 181–203 (LTLNLGVMVPFILCLISFFLLLF) traverse the membrane as a helical segment. The Cytoplasmic segment spans residues 204–234 (SLVRHTKQIRLHATGFRDPSTEAHMRAIKAV). Residues 235–257 (IIFLLLLIVYYPVFLVMTSSALI) traverse the membrane as a helical segment. The Extracellular segment spans residues 258-261 (PQGK). Residues 262–284 (LVLMIGDIVTVIFPSSHSFILIM) form a helical membrane-spanning segment. The Cytoplasmic portion of the chain corresponds to 285-312 (GNSKLREAFLKMLRFVKCFLRRRKPFVP).

Belongs to the G-protein coupled receptor T2R family. In terms of tissue distribution, expressed in subsets of taste receptor cells of the tongue and palate epithelium and exclusively in gustducin-positive cells.

It localises to the membrane. Its function is as follows. Gustducin-coupled receptor implicated in the perception of bitter compounds in the oral cavity and the gastrointestinal tract. Signals through PLCB2 and the calcium-regulated cation channel TRPM5. This is Taste receptor type 2 member 9 (TAS2R9) from Homo sapiens (Human).